The chain runs to 164 residues: uncharacterized protein (164 aa).

A run of 4 helical transmembrane segments spans residues 25 to 45 (QFGF…PLLG), 63 to 83 (GMAV…VYIV), 120 to 140 (FWTA…ADFF), and 141 to 161 (TVQM…LMMM).

This sequence belongs to the major facilitator superfamily.

Its subcellular location is the cell membrane. This is an uncharacterized protein from Bacillus subtilis (strain 168).